The primary structure comprises 520 residues: Fumarate hydratase, mitochondrial (520 aa).

Residues 1–39 (MASVAHISTAKAIFRAGGLPCRRLITPTLTGLPLKTHRM) constitute a mitochondrion transit peptide. Residues 153-155 (SGT), 184-187 (HPND), 194-196 (SSN), and Thr-242 contribute to the substrate site. The active-site Proton donor/acceptor is the His-243. The active site involves Ser-373. Substrate-binding positions include Ser-374 and 379-381 (KVN).

It belongs to the class-II fumarase/aspartase family. Fumarase subfamily. In terms of assembly, homotetramer.

It is found in the mitochondrion matrix. The protein localises to the cytoplasm. The protein resides in the nucleus. It catalyses the reaction (S)-malate = fumarate + H2O. Its pathway is carbohydrate metabolism; tricarboxylic acid cycle; (S)-malate from fumarate: step 1/1. Its function is as follows. Catalyzes the reversible stereospecific interconversion of fumarate to L-malate. In mitochondrion, catalyzes the hydration of fumarate to L-malate in the tricarboxylic acid (TCA) cycle to facilitate a transition step in the production of energy in the form of NADH. In cytoplasm and nucleus, involved in DNA repair in response to DNA damage: following DNA double-strand breaks (DSBs), translocates from the cytosol to the nucleus and promotes DNA repair by catalyzing the dehydration of L-malate to fumarate. The polypeptide is Fumarate hydratase, mitochondrial (fum1) (Schizosaccharomyces pombe (strain 972 / ATCC 24843) (Fission yeast)).